The chain runs to 308 residues: Probable plastid-lipid-associated protein 9, chloroplastic (308 aa).

A chloroplast-targeting transit peptide spans 1 to 55; that stretch reads MALIQHGSVSGTSAVRLSFSSSVSPPSSSPPLSRVSLNFQSEKKSCYRRMICRAM.

The protein belongs to the PAP/fibrillin family.

It localises to the plastid. Its subcellular location is the chloroplast. It is found in the plastoglobule. This is Probable plastid-lipid-associated protein 9, chloroplastic (PAP9) from Arabidopsis thaliana (Mouse-ear cress).